The sequence spans 290 residues: Protein translocase subunit SecF (290 aa).

Helical transmembrane passes span V15–G35, K131–F151, A156–I176, S184–F204, T234–L256, and I260–L282.

This sequence belongs to the SecD/SecF family. SecF subfamily. As to quaternary structure, forms a complex with SecD. Part of the essential Sec protein translocation apparatus which comprises SecA, SecYEG and auxiliary proteins SecDF. Other proteins may also be involved.

Its subcellular location is the cell inner membrane. Its function is as follows. Part of the Sec protein translocase complex. Interacts with the SecYEG preprotein conducting channel. SecDF uses the proton motive force (PMF) to complete protein translocation after the ATP-dependent function of SecA. In Dictyoglomus turgidum (strain DSM 6724 / Z-1310), this protein is Protein translocase subunit SecF.